A 72-amino-acid polypeptide reads, in one-letter code: MTNEIKTLSERIDTLETRLAYQDDTIETLNQTITAQWKQIDALTRQIAQLSERLQEAETNAPGPANERPPHY.

This sequence belongs to the SlyX family.

The chain is Protein SlyX homolog from Bradyrhizobium diazoefficiens (strain JCM 10833 / BCRC 13528 / IAM 13628 / NBRC 14792 / USDA 110).